A 918-amino-acid chain; its full sequence is Protein translocase subunit SecA (918 aa).

Residues Gln87, 105 to 109 (GEGKT), and Asp516 contribute to the ATP site. Zn(2+)-binding residues include Cys902, Cys904, Cys913, and His914.

Belongs to the SecA family. As to quaternary structure, monomer and homodimer. Part of the essential Sec protein translocation apparatus which comprises SecA, SecYEG and auxiliary proteins SecDF-YajC and YidC. It depends on Zn(2+) as a cofactor.

Its subcellular location is the cell inner membrane. The protein localises to the cytoplasm. The catalysed reaction is ATP + H2O + cellular proteinSide 1 = ADP + phosphate + cellular proteinSide 2.. Functionally, part of the Sec protein translocase complex. Interacts with the SecYEG preprotein conducting channel. Has a central role in coupling the hydrolysis of ATP to the transfer of proteins into and across the cell membrane, serving both as a receptor for the preprotein-SecB complex and as an ATP-driven molecular motor driving the stepwise translocation of polypeptide chains across the membrane. The protein is Protein translocase subunit SecA of Methylibium petroleiphilum (strain ATCC BAA-1232 / LMG 22953 / PM1).